Reading from the N-terminus, the 546-residue chain is MWGLVLLGYVLFVIEWFVIDFIRGSAASLLTEQTSAVPQYGGWFSSFFVADAGFIPGQATNWTITLLRAVGSILCGVMVVKFGYRHAVMIMMGLMCVCFPFLIIGSPLGGHNELTLLRPASSEVISKLTKISSSLQQGQLLGPVQVGSQTMLADGTPVSLIKGINGNEIGTSASMTGYAFFIIFRSTIAIGGTTLIAYAQPIIASLSSNRKKSILSNANFWGFNVGLVIVAAPFLIPGVGRFATANWVWVVTFMILLVFAMLLVFAWFEKKVDHMLPQKQSKTNQSLSVRPSALSILKRKTTWKLLAIAGVGTILLINPLTQTWFNSLLAISGAKKAIIPTARPILLILWVMGYLLGYFLLSPFNKTIYDKKRWLHFIFTANAVLVLLIVIFAATLGLNTVVGFTFVGIFTFIAGGFGWSLGSSILILPYEYKEYKRNEVSIIFGYVWGFAYVFYSIFDIITSVFLDAPRIATGNTSANILPGAIAAIVLFVSLLLVINWVIIYLPSSWIKNGDECVSEMTKKWRITQWQFLIANKAKNRYADLLK.

12 consecutive transmembrane segments (helical) span residues tryptophan 2–isoleucine 22, tryptophan 62–phenylalanine 82, valine 88–leucine 108, alanine 179–alanine 199, phenylalanine 220–glycine 240, valine 248–phenylalanine 268, leucine 305–phenylalanine 325, proline 344–phenylalanine 364, phenylalanine 377–glycine 397, valine 401–leucine 421, isoleucine 442–threonine 462, and isoleucine 485–leucine 505.

This sequence belongs to the major facilitator superfamily.

Its subcellular location is the cell membrane. The polypeptide is Major facilitator superfamily transporter MPN_077 (Mycoplasma pneumoniae (strain ATCC 29342 / M129 / Subtype 1) (Mycoplasmoides pneumoniae)).